The sequence spans 76 residues: Adropin (76 aa).

Positions 1-33 (MGAAISQGALIAIVCNGLVGFLLLLLWVILCWA) are cleaved as a signal peptide. The tract at residues 41-76 (VDSLSESSPNSSPGPCPEKAPPPQKPSHEGSYLLQP) is disordered. Positions 52–65 (SPGPCPEKAPPPQK) are enriched in pro residues.

As to expression, expressed in liver and brain.

The protein localises to the secreted. Involved in the regulation of glucose homeostasis and lipid metabolism. The sequence is that of Adropin (ENHO) from Homo sapiens (Human).